The primary structure comprises 177 residues: Alpha-crystallin A chain (177 aa).

Met-1 is subject to N-acetylmethionine. Residues 52–162 form the sHSP domain; that stretch reads VFRNFLDSGI…NWQDRPIPVS (111 aa). Zn(2+) contacts are provided by His-100 and Glu-102. Cys-131 and Cys-142 are oxidised to a cystine. The interval 146 to 177 is disordered; the sequence is TRPGDDSNWQDRPIPVSREEKQGTQPEIRADP. Ser-162 carries an O-linked (GlcNAc) serine glycan. Residues 162–177 show a composition bias toward basic and acidic residues; sequence SREEKQGTQPEIRADP.

It belongs to the small heat shock protein (HSP20) family. In terms of assembly, heteropolymer composed of three CRYAA and one CRYAB subunits. Inter-subunit bridging via zinc ions enhances stability, which is crucial as there is no protein turn over in the lens. Can also form homodimers and homotetramers (dimers of dimers) which serve as the building blocks of homooligomers.

It localises to the cytoplasm. Its subcellular location is the nucleus. In terms of biological role, contributes to the transparency and refractive index of the lens. May act as a chaperone, preventing aggregation of various proteins under a wide range of stress conditions. This Squalus acanthias (Spiny dogfish) protein is Alpha-crystallin A chain (cryaa).